A 608-amino-acid polypeptide reads, in one-letter code: MKWLKQLQSLHTKLVIVYVLLIIIGMQIIGLYFTNSLEKELTNNFMKNIKQYATQLEVNIERIYRDDPSNAQKEVQSLLNEYANRQEIEEIRFIDKDQIIMATAKISSHNMINQKVNDNSVQKALSLGESNSHNVLKDYGSGKERIWIYNLPVKNGNETIGNIYIESNINDVYNQLNNINQIFIIGTAISLFITVILGFFIARTITRPITDMRNQTVEMSKGNYTQRVKIYGNDEIGELALAFNNLSKRVQEAQANTESEKRRLDSVITHMSDGIIATDRRGRVRIVNDMAIKMLGMSKEDLIGYYMLSVLNLEDEFSLDEIQENNDSFLLDINEDEGIIARVNFSTIVQETGFVTGYIAVLHDVTEQQQVERERREFVANVSHELRTPLTSMNSYIEALEEGVWKDDNLAPSFLSVTREETERMIRLVNDLLQLSKMDNESEQITKEIVDFNMFINKIINRHEMAAKDTTFVREIPSETIFTEIDPDKMTQVFDNVITNAMKYSRGEKRVEFHVKQNALYNRMTIRIKDNGIGIPINKVDKIFDRFYRVDKARTRKMGGTGLGLAISKEIVEAHNGRIWANSVEGQGTSIFITLPCEVIDDGDWDEE.

2 helical membrane passes run 14–34 and 182–202; these read LVIV…LYFT and IFII…FFIA. Residues 203–255 form the HAMP domain; it reads RTITRPITDMRNQTVEMSKGNYTQRVKIYGNDEIGELALAFNNLSKRVQEAQA. The PAS domain maps to 260–330; it reads EKRRLDSVIT…EIQENNDSFL (71 aa). One can recognise a PAC domain in the interval 324–377; the sequence is ENNDSFLLDINEDEGIIARVNFSTIVQETGFVTGYIAVLHDVTEQQQVERERRE. The Histidine kinase domain maps to 381-599; it reads NVSHELRTPL…SIFITLPCEV (219 aa). Phosphohistidine; by autocatalysis is present on H384.

Autophosphorylated.

The protein localises to the cell membrane. The catalysed reaction is ATP + protein L-histidine = ADP + protein N-phospho-L-histidine.. Functionally, member of the two-component regulatory system WalK/WalR. WalK functions as a sensor protein kinase which is autophosphorylated at a histidine residue and transfers its phosphate group to WalR. In Staphylococcus haemolyticus (strain JCSC1435), this protein is Sensor protein kinase WalK (walK).